Reading from the N-terminus, the 527-residue chain is MPIPTPHGGKLRDLVIRDAPLKQQLLQEAKTLPALTLTARQLCDLELILNGGFSPLTGFLNQEDYNSVVNDLRLSSVKNESNGKGLLWPIPITLDVDETTSKKHSVGDRIVLIDLRDETPLAILTIESIYKPDKKLEAEKVFRGDSEHPANKYLLETAGDYYIGGELQGINYPKHYDYVDARKTPTELRQEFEKLGWAQENIVAFQTRNPMHRAHRELTIRAAQDIGDKAHILIHPVVGLTKPGDIDHHTRVKVYKQILTKFPDGLATLSLLPLAMRMGGDREALWHALIRTNYGVDHFIVGRDHAGPGKNSQGVDFYGPYDAQELLAKYDDELNIKIVPFRMVTYLPDEDRYAPIDTIDVKKVRTANISGTELRNKLKTGDEIPSWFSYPEVVKILRETNPPRSKQGFAILIDNSHKLGDYLSFALQSTLNQFSGERRITKLNAHQANDSFIVGELVKAGSGVIVPTTNPTPIVNVVGNGNSLVVNQKNNNNQASGNADGEFNLSNDDLVAVVDEIVNYLKDQGFY.

The tract at residues 1 to 176 is N-terminal; it reads MPIPTPHGGK…LQGINYPKHY (176 aa). The tract at residues 177 to 406 is catalytic; the sequence is DYVDARKTPT…LRETNPPRSK (230 aa). Sulfate is bound at residue Gln-206. ATP contacts are provided by residues 206–209 and 302–305; these read QTRN and GRDH. Active-site residues include Thr-207, Arg-208, and Asn-209. Arg-208 is a binding site for sulfate. Ala-306 serves as a coordination point for sulfate. Val-344 is a binding site for ATP. Residues 407–527 form a required for oligomerization; adenylyl-sulfate kinase-like region; it reads QGFAILIDNS…VNYLKDQGFY (121 aa).

It belongs to the sulfate adenylyltransferase family. Homohexamer. Dimer of trimers.

Its subcellular location is the cytoplasm. It catalyses the reaction sulfate + ATP + H(+) = adenosine 5'-phosphosulfate + diphosphate. It functions in the pathway sulfur metabolism; hydrogen sulfide biosynthesis; sulfite from sulfate: step 1/3. Functionally, catalyzes the first intracellular reaction of sulfate assimilation, forming adenosine-5'-phosphosulfate (APS) from inorganic sulfate and ATP. Plays an important role in sulfate activation as a component of the biosynthesis pathway of sulfur-containing amino acids. The polypeptide is Sulfate adenylyltransferase (Candida albicans (strain SC5314 / ATCC MYA-2876) (Yeast)).